The chain runs to 350 residues: Tsukushi (350 aa).

Positions 1–17 (MAPSWLFLLFIPGMVGS) are cleaved as a signal peptide. The region spanning 18-59 (SRSCFPGCQCIVDNFGLFHSFSLTKVDCSGVGPHVVPVSIPL) is the LRRNT domain. 10 LRR repeats span residues 60 to 81 (DTSY…VLSG), 86 to 107 (TLIN…TFSK), 110 to 131 (YLES…SFLY), 133 to 154 (RLTE…AFTL), 159 to 180 (RSMT…AERP), 183 to 203 (NIHS…LHGI), 204 to 225 (PLRH…SFLG), 228 to 250 (GLTH…SFKT), 253 to 275 (SLLD…MFFG), and 278 to 299 (SLQE…IMLN). N-linked (GlcNAc...) asparagine glycans are attached at residues Asn-75 and Asn-91.

Interacts with bmp4. Interacts with dll1 (via extracellular region). Interacts with fgf8; inhibits fgf8 signaling. Interacts with nodal2/Xnr2; enhances nodal2 activity.

It localises to the secreted. In terms of biological role, contributes to various developmental events through its interactions with multiple signaling pathways. Dorsalizing factor which functions as an inhibitor of bone morphogenetic proteins (BMP) during gastrulation. Promotes dll1-dependent activation of Notch signaling and is required for neural crest formation. Induces endoderm and dorsal mesoderm formation by enhancing nodal2/Xnr2 activity while inhibiting ventrolateral mesoderm formation through inhibition of fgf8. The protein is Tsukushi (tsku) of Xenopus tropicalis (Western clawed frog).